The sequence spans 310 residues: MNGGNHTSMTELFILGPTEDPTFCIAFFVIFLGVYMVTLVGNISIITLIRISSQLHTPVYLFLNHLAFVDILYSTLVSVIMLMELLEHELALPVAACAAELCITVLFGSSECFLLAAMAYDCYVAICSPLLYSTLMSSRVCFLLLGMSYVGGCMNGWIFTGCLLNLSFYGPYQIDHFFCDFSPLLKLSCSDVSIIGIIPSISSGSIIVVTVLVIAVFYICILMTILKMHSTDGCHKAFSTCNSYLTAVTLYYGTITFIYVMPKSNYSTEKNKVLSEFYTVVIPMLNHLIYSLKNRDVKDALRKAIVRVYT.

At Met-1–Ile-25 the chain is on the extracellular side. A glycan (N-linked (GlcNAc...) asparagine) is linked at Asn-5. Residues Ala-26–Ile-46 traverse the membrane as a helical segment. Topologically, residues Thr-47–Gln-54 are cytoplasmic. A helical membrane pass occupies residues Leu-55–Thr-75. At Leu-76–Ala-99 the chain is on the extracellular side. Cys-97 and Cys-189 are oxidised to a cystine. A helical transmembrane segment spans residues Glu-100–Tyr-120. Residues Asp-121–Ser-133 lie on the Cytoplasmic side of the membrane. A helical membrane pass occupies residues Thr-134–Met-154. At Asn-155–Gly-196 the chain is on the extracellular side. Asn-165 carries N-linked (GlcNAc...) asparagine glycosylation. Residues Ile-197–Phe-217 traverse the membrane as a helical segment. The Cytoplasmic portion of the chain corresponds to Tyr-218 to Ala-237. Residues Phe-238–Ile-258 form a helical membrane-spanning segment. Residues Tyr-259–Asn-271 lie on the Extracellular side of the membrane. N-linked (GlcNAc...) asparagine glycosylation is present at Asn-265. The chain crosses the membrane as a helical span at residues Lys-272–Leu-292. Residues Lys-293–Thr-310 lie on the Cytoplasmic side of the membrane.

Belongs to the G-protein coupled receptor 1 family.

It localises to the cell membrane. In terms of biological role, potential odorant receptor. The protein is Olfactory receptor 5P54 of Mus musculus (Mouse).